Here is a 370-residue protein sequence, read N- to C-terminus: MRVKEQLLTLRAYVPGKNIEEVKREYGLSKIVKLASNENPFGCSARVTEALTSLASQYALYPDGHAFELRTQVAKHLGVKAEQLLFGSGLDEVIQMISRALLHEGTNVVMANPTFSQYHHHAVIEGAEVREVSLKDGIHDLDAMLQQVDDQTKIVWICNPNNPTGTYVEKQKLLSFLESVPKSALVIMDEAYYEYAGAEDYPQTLPLLEKYENLMVLRTFSKAYGLAAFRIGYAVGNTELIGQLEVARLPFNTSTVAQSVALAALEDQAFLQECVKKNEEGLHQYYAFCKEYNVFYYPSQTNFIFLKLGIPGNEAFERLMKKGYIVRSGAAFGIDDGIRITVGLKEENDEIIELLKELVNEQVQKEETYS.

An N6-(pyridoxal phosphate)lysine modification is found at Lys222.

This sequence belongs to the class-II pyridoxal-phosphate-dependent aminotransferase family. Histidinol-phosphate aminotransferase subfamily. As to quaternary structure, homodimer. Pyridoxal 5'-phosphate serves as cofactor.

It catalyses the reaction L-histidinol phosphate + 2-oxoglutarate = 3-(imidazol-4-yl)-2-oxopropyl phosphate + L-glutamate. The protein operates within amino-acid biosynthesis; L-histidine biosynthesis; L-histidine from 5-phospho-alpha-D-ribose 1-diphosphate: step 7/9. The polypeptide is Histidinol-phosphate aminotransferase 1 (hisC1) (Bacillus anthracis).